The chain runs to 89 residues: Small ribosomal subunit protein uS17 (89 aa).

This sequence belongs to the universal ribosomal protein uS17 family. In terms of assembly, part of the 30S ribosomal subunit.

Its function is as follows. One of the primary rRNA binding proteins, it binds specifically to the 5'-end of 16S ribosomal RNA. The protein is Small ribosomal subunit protein uS17 of Xanthomonas campestris pv. campestris (strain 8004).